The following is a 410-amino-acid chain: Probable peptidoglycan glycosyltransferase FtsW (410 aa).

Residues 1-37 (MRSEERQLNLFGTSVNWSWPNLFKEREAPGMQLYDRA) lie on the Cytoplasmic side of the membrane. A helical membrane pass occupies residues 38–58 (LLFAVLSLICFGFVMVMSASM). Residues 59–69 (PEAQSLTGNPY) lie on the Periplasmic side of the membrane. Residues 70 to 90 (HFAIRHFAYLVGCAVIAAVVL) form a helical membrane-spanning segment. At 91-99 (RIEMSRWQQ) the chain is on the cytoplasmic side. A helical membrane pass occupies residues 100–120 (FSPLLLLIVGIMLVAVLLVGT). Residues 121 to 131 (SVNGATRWLSV) lie on the Periplasmic side of the membrane. Residues 132–154 (GPIRIQVAELAKFAFTIYMAGYL) traverse the membrane as a helical segment. Residues 155 to 163 (VRRHQEIRE) lie on the Cytoplasmic side of the membrane. The chain crosses the membrane as a helical span at residues 164-184 (NAKGFYKPIAVFAVYAFLILM). The Periplasmic segment spans residues 185–186 (QP). The chain crosses the membrane as a helical span at residues 187-207 (DLGTVVVLFVGTVGLLFLAGA). Arg-208 is a topological domain (cytoplasmic). Residues 209–229 (LLDFFALILTGVMAFVALVLL) traverse the membrane as a helical segment. The Periplasmic segment spans residues 230 to 291 (EPYRMRRVTS…PEAHTDFIFA (62 aa)). The helical transmembrane segment at 292–312 (VIGEELGFIGIVVVLSVLLFV) threads the bilayer. Over 313–336 (ALRAIKLGNLCIEIDKPFEGYLAY) the chain is Cytoplasmic. Residues 337 to 357 (AIGIWFCFQTVVNVGASIGML) form a helical membrane-spanning segment. The Periplasmic segment spans residues 358–364 (PTKGLTL). Residues 365–385 (PFISYGGSSLWVMTAAAMILI) traverse the membrane as a helical segment. Residues 386 to 410 (RIDHERRLSSIQAVQGKKVNDNREY) are Cytoplasmic-facing.

The protein belongs to the SEDS family. FtsW subfamily.

The protein resides in the cell inner membrane. It carries out the reaction [GlcNAc-(1-&gt;4)-Mur2Ac(oyl-L-Ala-gamma-D-Glu-L-Lys-D-Ala-D-Ala)](n)-di-trans,octa-cis-undecaprenyl diphosphate + beta-D-GlcNAc-(1-&gt;4)-Mur2Ac(oyl-L-Ala-gamma-D-Glu-L-Lys-D-Ala-D-Ala)-di-trans,octa-cis-undecaprenyl diphosphate = [GlcNAc-(1-&gt;4)-Mur2Ac(oyl-L-Ala-gamma-D-Glu-L-Lys-D-Ala-D-Ala)](n+1)-di-trans,octa-cis-undecaprenyl diphosphate + di-trans,octa-cis-undecaprenyl diphosphate + H(+). Its pathway is cell wall biogenesis; peptidoglycan biosynthesis. In terms of biological role, peptidoglycan polymerase that is essential for cell division. In Shewanella sediminis (strain HAW-EB3), this protein is Probable peptidoglycan glycosyltransferase FtsW.